A 437-amino-acid polypeptide reads, in one-letter code: ATP-dependent protease ATPase subunit HslU (437 aa).

ATP-binding positions include Val18, 60–65 (GCGKTE), Asp250, Glu315, and Arg387.

Belongs to the ClpX chaperone family. HslU subfamily. In terms of assembly, a double ring-shaped homohexamer of HslV is capped on each side by a ring-shaped HslU homohexamer. The assembly of the HslU/HslV complex is dependent on binding of ATP.

It is found in the cytoplasm. ATPase subunit of a proteasome-like degradation complex; this subunit has chaperone activity. The binding of ATP and its subsequent hydrolysis by HslU are essential for unfolding of protein substrates subsequently hydrolyzed by HslV. HslU recognizes the N-terminal part of its protein substrates and unfolds these before they are guided to HslV for hydrolysis. The protein is ATP-dependent protease ATPase subunit HslU of Methylobacterium radiotolerans (strain ATCC 27329 / DSM 1819 / JCM 2831 / NBRC 15690 / NCIMB 10815 / 0-1).